The primary structure comprises 151 residues: tRNA-specific adenosine deaminase (151 aa).

The region spanning 4-122 is the CMP/dCMP-type deaminase domain; the sequence is NRDSYWMKIA…PFLKKIFINL (119 aa). Zn(2+) is bound at residue histidine 55. The Proton donor role is filled by glutamate 57. Cysteine 85 and cysteine 88 together coordinate Zn(2+).

The protein belongs to the cytidine and deoxycytidylate deaminase family. As to quaternary structure, homodimer. Zn(2+) serves as cofactor.

It carries out the reaction adenosine(34) in tRNA + H2O + H(+) = inosine(34) in tRNA + NH4(+). Functionally, catalyzes the deamination of adenosine to inosine at the wobble position 34 of tRNA(Arg2). The chain is tRNA-specific adenosine deaminase from Buchnera aphidicola subsp. Schizaphis graminum (strain Sg).